A 104-amino-acid polypeptide reads, in one-letter code: Phosphoribosyl-ATP pyrophosphatase (104 aa).

This sequence belongs to the PRA-PH family.

Its subcellular location is the cytoplasm. The enzyme catalyses 1-(5-phospho-beta-D-ribosyl)-ATP + H2O = 1-(5-phospho-beta-D-ribosyl)-5'-AMP + diphosphate + H(+). Its pathway is amino-acid biosynthesis; L-histidine biosynthesis; L-histidine from 5-phospho-alpha-D-ribose 1-diphosphate: step 2/9. This Erythrobacter litoralis (strain HTCC2594) protein is Phosphoribosyl-ATP pyrophosphatase.